A 359-amino-acid chain; its full sequence is Phospho-N-acetylmuramoyl-pentapeptide-transferase (359 aa).

10 helical membrane passes run 27 to 47 (GAFF…INAL), 70 to 90 (TPTM…LLWA), 97 to 117 (VWLV…DDWA), 133 to 153 (LAIG…VHPE), 167 to 187 (VLLN…VGSA), 198 to 218 (GLAI…AYAV), 238 to 258 (LLIF…YNAP), 261 to 281 (AVFM…AIAV), 287 to 307 (IVLA…IVQV), and 336 to 356 (QVVI…LATL).

This sequence belongs to the glycosyltransferase 4 family. MraY subfamily. Requires Mg(2+) as cofactor.

The protein resides in the cell inner membrane. The catalysed reaction is UDP-N-acetyl-alpha-D-muramoyl-L-alanyl-gamma-D-glutamyl-meso-2,6-diaminopimeloyl-D-alanyl-D-alanine + di-trans,octa-cis-undecaprenyl phosphate = di-trans,octa-cis-undecaprenyl diphospho-N-acetyl-alpha-D-muramoyl-L-alanyl-D-glutamyl-meso-2,6-diaminopimeloyl-D-alanyl-D-alanine + UMP. It participates in cell wall biogenesis; peptidoglycan biosynthesis. In terms of biological role, catalyzes the initial step of the lipid cycle reactions in the biosynthesis of the cell wall peptidoglycan: transfers peptidoglycan precursor phospho-MurNAc-pentapeptide from UDP-MurNAc-pentapeptide onto the lipid carrier undecaprenyl phosphate, yielding undecaprenyl-pyrophosphoryl-MurNAc-pentapeptide, known as lipid I. The sequence is that of Phospho-N-acetylmuramoyl-pentapeptide-transferase from Jannaschia sp. (strain CCS1).